The following is a 272-amino-acid chain: Auxin-responsive protein IAA5 (272 aa).

Residues 1–92 (MSPPLEPHDY…DSSPRHGASS (92 aa)) form a disordered region. Composition is skewed to low complexity over residues 14 to 33 (SAAA…SPNP) and 40 to 50 (PRLTLRLGLPG). The EAR-like (transcriptional repression) motif lies at 44–48 (LRLGL). One can recognise a PB1 domain in the interval 152–256 (PLYVKVSMDG…RKLKIMRGSD (105 aa)).

It belongs to the Aux/IAA family. Homodimers and heterodimers. In terms of tissue distribution, highly expressed in roots and flowers. Expressed in shoots.

Its subcellular location is the nucleus. Aux/IAA proteins are short-lived transcriptional factors that function as repressors of early auxin response genes at low auxin concentrations. In Oryza sativa subsp. indica (Rice), this protein is Auxin-responsive protein IAA5 (IAA5).